Reading from the N-terminus, the 293-residue chain is 5'-3' exoribonuclease Rnm (293 aa).

Mn(2+)-binding residues include His-13, His-15, Asp-20, His-45, Glu-72, His-83, His-198, Asp-255, and His-257.

It belongs to the PHP family. TrpH/YciV subfamily. Mn(2+) serves as cofactor.

The catalysed reaction is a ribonucleoside 3',5'-bisphosphate + H2O = a ribonucleoside 5'-phosphate + phosphate. Exoribonuclease that catalyzes the last steps of 5S, 16S and 23S rRNA 5'-end maturation. Removes 3 nucleotides (nt) from the 5' end of 5S, 16S and 23S rRNA precursors to generate the mature 5' ends. Precursors with longer extensions are not processed (7 nt at the 5' end of pre-23S rRNA or 66 nt at the 5'-end of 16S rRNA are not processed). 5S and 23S rRNA maturation occurs more efficiently and accurately on ribosomal particles as compared to free RNA; the enzyme overdigests free RNA but generates the correct 5'-end in ribosomes from rnm deletion strains. Efficiently catalyzes the hydrolysis of the 3'-phosphate from 3',5'-bis-phosphonucleotides as well as the successive hydrolysis of 5'-phosphomononucleotides from the 5'-end of short pieces of RNA and DNA, with no specificity toward the identity of the nucleotide base. Is more efficient at hydrolyzing RNA oligonucleotides than DNA oligonucleotides. This enzyme can also hydrolyze annealed DNA duplexes, albeit at a catalytic efficiency approximately 10-fold lower than that of the corresponding single-stranded oligonucleotides. The protein is 5'-3' exoribonuclease Rnm of Escherichia coli (strain K12).